Here is a 99-residue protein sequence, read N- to C-terminus: MEQITLSFPASRALSGRALAGVVGSGDMEVLYTAAQSATLNVQITTSVDNSQARWQALFDRLNLINGLPAGQLIIHDFGATPGVARIRIEQVFEEAAHA.

S25 carries the post-translational modification O-(phosphoribosyl dephospho-coenzyme A)serine.

Post-translationally, covalently binds the prosthetic group of malonate decarboxylase.

The protein localises to the cytoplasm. Subunit of malonate decarboxylase, it is an acyl carrier protein to which acetyl and malonyl thioester residues are bound via a 2'-(5''-phosphoribosyl)-3'-dephospho-CoA prosthetic group and turn over during the catalytic mechanism. In Klebsiella pneumoniae, this protein is Malonate decarboxylase acyl carrier protein (mdcC).